Reading from the N-terminus, the 375-residue chain is Dual-specificity RNA methyltransferase RlmN (375 aa).

E93 acts as the Proton acceptor in catalysis. Positions 99–346 constitute a Radical SAM core domain; it reads ETNRGTLCVS…TTTRKTRGDD (248 aa). A disulfide bridge connects residues C106 and C351. Positions 113, 117, and 120 each coordinate [4Fe-4S] cluster. S-adenosyl-L-methionine is bound by residues 177 to 178, S209, 231 to 233, and N308; these read GE and SLH. The active-site S-methylcysteine intermediate is the C351.

The protein belongs to the radical SAM superfamily. RlmN family. [4Fe-4S] cluster serves as cofactor.

Its subcellular location is the cytoplasm. The enzyme catalyses adenosine(2503) in 23S rRNA + 2 reduced [2Fe-2S]-[ferredoxin] + 2 S-adenosyl-L-methionine = 2-methyladenosine(2503) in 23S rRNA + 5'-deoxyadenosine + L-methionine + 2 oxidized [2Fe-2S]-[ferredoxin] + S-adenosyl-L-homocysteine. It carries out the reaction adenosine(37) in tRNA + 2 reduced [2Fe-2S]-[ferredoxin] + 2 S-adenosyl-L-methionine = 2-methyladenosine(37) in tRNA + 5'-deoxyadenosine + L-methionine + 2 oxidized [2Fe-2S]-[ferredoxin] + S-adenosyl-L-homocysteine. Functionally, specifically methylates position 2 of adenine 2503 in 23S rRNA and position 2 of adenine 37 in tRNAs. m2A2503 modification seems to play a crucial role in the proofreading step occurring at the peptidyl transferase center and thus would serve to optimize ribosomal fidelity. The sequence is that of Dual-specificity RNA methyltransferase RlmN from Azoarcus sp. (strain BH72).